Reading from the N-terminus, the 415-residue chain is uncharacterized protein (415 aa).

[4Fe-4S] cluster is bound by residues Cys-276 and Cys-316.

In terms of assembly, homodimer. The cofactor is [4Fe-4S] cluster.

This is an uncharacterized protein from Methanocaldococcus jannaschii (strain ATCC 43067 / DSM 2661 / JAL-1 / JCM 10045 / NBRC 100440) (Methanococcus jannaschii).